We begin with the raw amino-acid sequence, 292 residues long: NAD kinase (292 aa).

Residue Asp73 is the Proton acceptor of the active site. Residues 73–74 (DG), 147–148 (NE), His158, Arg175, Asp177, 188–193 (TAYSLS), and Gln247 each bind NAD(+).

It belongs to the NAD kinase family. A divalent metal cation is required as a cofactor.

It localises to the cytoplasm. It carries out the reaction NAD(+) + ATP = ADP + NADP(+) + H(+). Involved in the regulation of the intracellular balance of NAD and NADP, and is a key enzyme in the biosynthesis of NADP. Catalyzes specifically the phosphorylation on 2'-hydroxyl of the adenosine moiety of NAD to yield NADP. This is NAD kinase from Salmonella dublin (strain CT_02021853).